The primary structure comprises 123 residues: Small ribosomal subunit protein uS12 (123 aa).

Residues Met1–Met24 form a disordered region. The span at Arg9 to Ser19 shows a compositional bias: basic residues. 3-methylthioaspartic acid is present on Asp89.

Belongs to the universal ribosomal protein uS12 family. As to quaternary structure, part of the 30S ribosomal subunit. Contacts proteins S8 and S17. May interact with IF1 in the 30S initiation complex.

Functionally, with S4 and S5 plays an important role in translational accuracy. Its function is as follows. Interacts with and stabilizes bases of the 16S rRNA that are involved in tRNA selection in the A site and with the mRNA backbone. Located at the interface of the 30S and 50S subunits, it traverses the body of the 30S subunit contacting proteins on the other side and probably holding the rRNA structure together. The combined cluster of proteins S8, S12 and S17 appears to hold together the shoulder and platform of the 30S subunit. This chain is Small ribosomal subunit protein uS12, found in Sphingopyxis alaskensis (strain DSM 13593 / LMG 18877 / RB2256) (Sphingomonas alaskensis).